Consider the following 118-residue polypeptide: BolA-like protein 3 (118 aa).

It belongs to the BolA/IbaG family. In terms of assembly, interacts with NFU1.

It localises to the mitochondrion matrix. In terms of biological role, acts as a mitochondrial iron-sulfur (Fe-S) cluster assembly factor that facilitates [4Fe-4S] cluster insertion into a subset of mitochondrial proteins such as lipoyl synthase (LS) and succinate dehydrogenase (SDH). Required during the last step of iron-sulfur protein assembly when the iron-sulfur cluster is inserted into the target protein. Acts together with NFU1, later than BOL1 and GRX5 in the [4Fe-4S] cluster insertion process. Not required for [2Fe-2S] cluster insertion into mitochondrial proteins. The polypeptide is BolA-like protein 3 (Saccharomyces cerevisiae (strain ATCC 204508 / S288c) (Baker's yeast)).